A 117-amino-acid chain; its full sequence is Large ribosomal subunit protein eL18 (117 aa).

It belongs to the eukaryotic ribosomal protein eL18 family.

The protein is Large ribosomal subunit protein eL18 of Halobacterium salinarum (strain ATCC 29341 / DSM 671 / R1).